Consider the following 818-residue polypeptide: Hillarin (818 aa).

The LIM zinc-binding domain occupies serine 9–glycine 76. Positions phenylalanine 97–lysine 141 are disordered. Positions serine 117–aspartate 137 are enriched in polar residues. Residues glutamine 216–serine 272 are a coiled coil.

Belongs to the transglutaminase-like superfamily. Interacts with pnut. In terms of tissue distribution, localizes to the neuropil of the embryonic central nervous system (at protein level). Also detected in third instar larval brain (at protein level).

Its subcellular location is the cytoplasm. It localises to the cell cortex. The protein localises to the cleavage furrow. Functionally, may act as a modulator of septin function during cytokinesis in the developing nervous system. In Drosophila melanogaster (Fruit fly), this protein is Hillarin.